Here is a 584-residue protein sequence, read N- to C-terminus: Alkaline nuclease (584 aa).

Positions 409 to 429 are disordered; that stretch reads GGGADHHLRGSPGDSPPPIPF.

This sequence belongs to the herpesviridae alkaline nuclease family. Interacts with major DNA-binding protein; this interaction increases the nuclease processivity of the alkaline exonuclease.

Its subcellular location is the host nucleus. The protein localises to the host cytoplasm. Functionally, plays a role in processing non linear or branched viral DNA intermediates in order to promote the production of mature packaged unit-length linear progeny viral DNA molecules. Exhibits endonuclease and exonuclease activities and accepts both double-stranded and single-stranded DNA as substrate. Exonuclease digestion of DNA is in the 5'-&gt; 3' direction and the products are 5'-monophosphate nucleosides. Additionally, forms a recombinase with the major DNA-binding protein, which displays strand exchange activity. The chain is Alkaline nuclease (UL98) from Homo sapiens (Human).